The following is a 357-amino-acid chain: Peptide chain release factor 1 (357 aa).

An N5-methylglutamine modification is found at glutamine 236. Positions 284–293 (RRKKDQERAN) are enriched in basic and acidic residues. Positions 284-313 (RRKKDQERANNRRKQIGSGDRSERIRTYNF) are disordered.

Belongs to the prokaryotic/mitochondrial release factor family. Methylated by PrmC. Methylation increases the termination efficiency of RF1.

It localises to the cytoplasm. In terms of biological role, peptide chain release factor 1 directs the termination of translation in response to the peptide chain termination codons UAG and UAA. The sequence is that of Peptide chain release factor 1 from Rickettsia bellii (strain RML369-C).